A 734-amino-acid polypeptide reads, in one-letter code: Methionine--tRNA ligase (734 aa).

The 'HIGH' region signature appears at 12–22 (PYVNNIPHLGN). Residues cysteine 143, cysteine 146, cysteine 155, and cysteine 158 each coordinate Zn(2+). Positions 330–334 (KFSKS) match the 'KMSKS' region motif. Residue lysine 333 participates in ATP binding. The region spanning 570-675 (FREKVLLRVV…QNPIAGERII (106 aa)) is the tRNA-binding domain.

The protein belongs to the class-I aminoacyl-tRNA synthetase family. MetG type 1 subfamily. As to quaternary structure, homodimer. Zn(2+) serves as cofactor.

It localises to the cytoplasm. It carries out the reaction tRNA(Met) + L-methionine + ATP = L-methionyl-tRNA(Met) + AMP + diphosphate. Its function is as follows. Is required not only for elongation of protein synthesis but also for the initiation of all mRNA translation through initiator tRNA(fMet) aminoacylation. This chain is Methionine--tRNA ligase, found in Borreliella burgdorferi (strain ZS7) (Borrelia burgdorferi).